The following is a 236-amino-acid chain: Uridylate kinase (236 aa).

10–13 serves as a coordination point for ATP; sequence KLSG. Gly52 is a binding site for UMP. 2 residues coordinate ATP: Gly53 and Arg57. UMP contacts are provided by residues Asp72 and 133–140; that span reads TGNPFFTT. Positions 160, 166, and 169 each coordinate ATP.

This sequence belongs to the UMP kinase family. Homohexamer.

It localises to the cytoplasm. The enzyme catalyses UMP + ATP = UDP + ADP. Its pathway is pyrimidine metabolism; CTP biosynthesis via de novo pathway; UDP from UMP (UMPK route): step 1/1. Its activity is regulated as follows. Inhibited by UTP. Its function is as follows. Catalyzes the reversible phosphorylation of UMP to UDP. The chain is Uridylate kinase from Polaromonas naphthalenivorans (strain CJ2).